The chain runs to 264 residues: Teichoic acids export ATP-binding protein TagH (264 aa).

Residues 5–243 enclose the ABC transporter domain; sequence VNIKNVTKEY…YEAFLNDFKK (239 aa). Residue 57 to 64 coordinates ATP; that stretch reads GINGSGKS.

The protein belongs to the ABC transporter superfamily. Teichoic acids exporter (TC 3.A.1.104.1) family. The complex is composed of two ATP-binding proteins (TagH) and two transmembrane proteins (TagG).

It localises to the cell membrane. It carries out the reaction ATP + H2O + teichoic acidSide 1 = ADP + phosphate + teichoic acidSide 2.. Its function is as follows. Part of the ABC transporter complex TagGH involved in teichoic acids export. Responsible for energy coupling to the transport system. This is Teichoic acids export ATP-binding protein TagH from Staphylococcus aureus (strain USA300).